The chain runs to 116 residues: Large ribosomal subunit protein bL17 (116 aa).

This sequence belongs to the bacterial ribosomal protein bL17 family. In terms of assembly, part of the 50S ribosomal subunit. Contacts protein L32.

The polypeptide is Large ribosomal subunit protein bL17 (Prochlorococcus marinus subsp. pastoris (strain CCMP1986 / NIES-2087 / MED4)).